Consider the following 1097-residue polypeptide: MSSSAIQVAKTATYLPDLVEVQRASFKWFLDEGLIEELDSFSPITDYTGKLELHFVGNEYRLKRPRHDVEEAKRRDATFASQMYVTCRLVNKETGEIKEQEVFIGELPLMTERGTFIINGAERVIVNQIVRSPGVYFKDEQDKNGRRTYNASVIPNRGAWLKFETDKNDLLHVRVDKTRKINAHVLMRAMGLSDNDVIDKLRHPEYYKKSIEAANEEGISSEDQALLELYKKLRPGEPPSVSGGQQLLQTRFFDPKRYDLGRVGRYKINKKLRLTIPDTVRTLTHEDVLSTLDYLINLELDVGGASLDDIDHLGNRRVRSVGELLQNQVRVGLNRLERIIKERMTVGETDSLTPAQLVNPKPLVAAVKEFFGSSQLSQFMDQTNPLAELTHKRRISALGPGGLTRERAGFAVRDIHPSHYGRLCPIETPEGPNAGLINSLATHARVNQYGFIETPFWKVENGRLIKEGDPIYLSADLEDECRVAPGDVATDADGQILAELIPVRYRQDFEKVPPEQVDYVQLSPVQVISVATSLIPFLEHDDANRALMGSNMQRQAVPLLRPERPLVGTGLETQVARDSGMVPISRVNGMVTFVDATAIIVRDEDGVDHTHYLQKYQRSNQDTCLNQRPIVCQGDPVIVGQVLADGSACEGGEIALGQNVLVAYMPWEGYNYEDAILVSERLVKDDLYTSVHIEKYEIEARQTKLGPEEITREIPNVAEESLGNLDEMGIIRIGAFVESGDILVGKVTPKGESDQPPEEKLLRAIFGEKARDVRDNSLRVPSTERGRVVDVRIYTREQGDELPPGANMVARVYVAQRRKIQVGDKMAGRHGNKGIISRILPREDMPFLPDGTPVDIVLNPLGVPSRMNVGQVFECLMGWAAANLDCRVKVVPFDEMYGAEKSQQTVEAYLKEAAKQPGKEWVYNPENPGKLQLIDGRSGEPFDQPVTVGYAQILKLVHLVDDKIHARSTGPYSLVTQQPLGGKAQQGGQRLGEMEVWALEAYGAAYTLQELLTVKSDDMQGRNEALNAIVKGKPIPRPGTPESFKVLMRELQSLGLDIAVYTDEGKEVDLMQDVNPRRSTPSRPTYESLGVADYDED.

Residues 1072–1097 are disordered; that stretch reads QDVNPRRSTPSRPTYESLGVADYDED.

The protein belongs to the RNA polymerase beta chain family. In cyanobacteria the RNAP catalytic core is composed of 2 alpha, 1 beta, 1 beta', 1 gamma and 1 omega subunit. When a sigma factor is associated with the core the holoenzyme is formed, which can initiate transcription.

It catalyses the reaction RNA(n) + a ribonucleoside 5'-triphosphate = RNA(n+1) + diphosphate. In terms of biological role, DNA-dependent RNA polymerase catalyzes the transcription of DNA into RNA using the four ribonucleoside triphosphates as substrates. The chain is DNA-directed RNA polymerase subunit beta from Prochlorococcus marinus (strain MIT 9303).